The chain runs to 192 residues: Fe/S biogenesis protein NfuA (192 aa).

[4Fe-4S] cluster is bound by residues Cys-149 and Cys-152.

The protein belongs to the NfuA family. In terms of assembly, homodimer. It depends on [4Fe-4S] cluster as a cofactor.

Its function is as follows. Involved in iron-sulfur cluster biogenesis. Binds a 4Fe-4S cluster, can transfer this cluster to apoproteins, and thereby intervenes in the maturation of Fe/S proteins. Could also act as a scaffold/chaperone for damaged Fe/S proteins. The polypeptide is Fe/S biogenesis protein NfuA (Shewanella sediminis (strain HAW-EB3)).